Here is a 118-residue protein sequence, read N- to C-terminus: Co-chaperonin GroES (118 aa).

This sequence belongs to the GroES chaperonin family. In terms of assembly, heptamer of 7 subunits arranged in a ring. Interacts with the chaperonin GroEL.

It localises to the cytoplasm. Together with the chaperonin GroEL, plays an essential role in assisting protein folding. The GroEL-GroES system forms a nano-cage that allows encapsulation of the non-native substrate proteins and provides a physical environment optimized to promote and accelerate protein folding. GroES binds to the apical surface of the GroEL ring, thereby capping the opening of the GroEL channel. The polypeptide is Co-chaperonin GroES (Helicobacter pylori (strain Shi470)).